The sequence spans 120 residues: Large ribosomal subunit protein bL17 (120 aa).

The protein belongs to the bacterial ribosomal protein bL17 family. As to quaternary structure, part of the 50S ribosomal subunit. Contacts protein L32.

This is Large ribosomal subunit protein bL17 from Geobacillus sp. (strain WCH70).